The following is a 355-amino-acid chain: Ion-translocating oxidoreductase complex subunit D (355 aa).

4 helical membrane-spanning segments follow: residues 23-43 (WVAL…GWGT), 44-64 (LVQL…VMLF), 78-109 (ALVT…IVIA), and 129-149 (VVLL…LPLI). The residue at position 194 (T194) is an FMN phosphoryl threonine. The next 5 helical transmembrane spans lie at 221 to 241 (FAGV…LILL), 250 to 270 (IPVG…LFFP), 273 to 293 (TASP…FFIA), 307 to 327 (ILFG…GGFP), and 328 to 348 (DGVA…DYYT).

This sequence belongs to the NqrB/RnfD family. As to quaternary structure, the complex is composed of six subunits: RnfA, RnfB, RnfC, RnfD, RnfE and RnfG. Requires FMN as cofactor.

Its subcellular location is the cell inner membrane. Part of a membrane-bound complex that couples electron transfer with translocation of ions across the membrane. In Vibrio vulnificus (strain CMCP6), this protein is Ion-translocating oxidoreductase complex subunit D.